Here is a 259-residue protein sequence, read N- to C-terminus: Chymotrypsin-1 (259 aa).

Positions 1–17 (MLRKVFAVVSVLLVVSA) are cleaved as a signal peptide. The propeptide at 18 to 32 (AKVTKLVLDDNYVNR) is activation peptide. The Peptidase S1 domain maps to 33–255 (VVGGEVAKNG…YHDWVRTTMA (223 aa)). A disulfide bridge links Cys-59 with Cys-75. Residues His-74 and Asp-119 each act as charge relay system in the active site. Intrachain disulfides connect Cys-182–Cys-198 and Cys-208–Cys-232. Ser-212 serves as the catalytic Charge relay system.

The protein belongs to the peptidase S1 family. In terms of tissue distribution, after blood feeding, expression is induced in the midgut epithelium, followed by secretion into the midgut lumen.

Its subcellular location is the secreted. It carries out the reaction Preferential cleavage: Tyr-|-Xaa, Trp-|-Xaa, Phe-|-Xaa, Leu-|-Xaa.. This is Chymotrypsin-1 (CHYM1) from Anopheles gambiae (African malaria mosquito).